Reading from the N-terminus, the 1009-residue chain is Protein-tyrosine kinase 2-beta (1009 aa).

In terms of domain architecture, FERM spans 39-359 (RILKVCFYSN…GYCRLQGEHK (321 aa)). A phosphoserine mark is found at Ser-361, Ser-375, and Ser-399. Tyr-402 carries the post-translational modification Phosphotyrosine; by autocatalysis. Residues 425 to 683 (VVLNRILGEG…ELVCSLSDIY (259 aa)) form the Protein kinase domain. Residues 431-439 (LGEGFFGEV), Lys-457, and 503-509 (ELYPYGE) each bind ATP. Asp-549 (proton acceptor) is an active-site residue. 3 positions are modified to phosphotyrosine: Tyr-579, Tyr-580, and Tyr-722. The segment at 702 to 725 (PKILEPTAFQEPPPKPSRPKYKHP) is disordered. A Phosphoserine modification is found at Ser-762. Thr-765 carries the phosphothreonine modification. The segment at 801 to 1009 (KIKMRQVLDR…VANLAHPPAE (209 aa)) is interaction with TGFB1I1. Tyr-834 carries the phosphotyrosine modification. At Ser-839 the chain carries Phosphoserine. Thr-842 carries the post-translational modification Phosphothreonine. A Phosphotyrosine modification is found at Tyr-849. Ser-866 is subject to Phosphoserine. Positions 868 to 1009 (QPTANLDRTD…VANLAHPPAE (142 aa)) are focal adhesion targeting (FAT). Tyr-881 is modified (phosphotyrosine).

The protein belongs to the protein kinase superfamily. Tyr protein kinase family. FAK subfamily. As to quaternary structure, homodimer, or homooligomer. Interacts with NPHP1, ASAP1, ASAP2, ARHGAP26, SKAP2 and TGFB1I1. The Tyr-402 phosphorylated form interacts with SRC (via SH2 domain) and SRC family members. Forms a signaling complex with EPHA1, LCK and phosphatidylinositol 3-kinase; upon activation by EFNA1. Interacts with GRB2 (via SH2 domain). Interacts with P53/TP53 and MDM2. Interacts with MYLK. Interacts with BCAR1. Interacts with RB1CC1. Interacts with RHOU. Interacts with VAV1. Interacts with PDPK1. Interacts with LPXN and PTPN12. Interacts with SIRPA and SH2D3C. Interacts (hypophosphorylated) with PXN. Interacts with ARHGAP10. Interacts with KCNA2. Phosphorylated on tyrosine residues in response to various stimuli that elevate the intracellular calcium concentration; this activation is indirect and may be mediated by production of reactive oxygen species (ROS). Tyr-402 is the major autophosphorylation site, but other kinases can also phosphorylate Tyr-402. Autophosphorylation occurs in trans, i.e. one subunit of the dimeric receptor phosphorylates tyrosine residues on the other subunit. Phosphorylation at Tyr-402 promotes interaction with SRC and SRC family members, leading to phosphorylation at Tyr-579; Tyr-580 and Tyr-881. Phosphorylation at Tyr-881 is important for interaction with GRB2. Phosphorylated on tyrosine residues upon activation of FGR and PKC. Recruitment by NPHP1 to cell matrix adhesions initiates Tyr-402 phosphorylation. In monocytes, adherence to substrata is required for tyrosine phosphorylation and kinase activation. Angiotensin II, thapsigargin and L-alpha-lysophosphatidic acid (LPA) also induce autophosphorylation and increase kinase activity. Phosphorylation by MYLK promotes ITGB2 activation and is thus essential to trigger neutrophil transmigration during lung injury. Dephosphorylated by PTPN12. As to expression, highly expressed in pulmonary vein endothelial cells, lung and brain (at protein level). Isoform 1 is expressed at high levels in the brain (hippocampus, cerebral cortex and olfactory bulb) and poorly in the spleen and other tissues, whereas isoforms 2 and 3 are expressed in the spleen and brain (highest in cerebellum).

The protein resides in the cytoplasm. Its subcellular location is the perinuclear region. The protein localises to the cell membrane. It localises to the cell projection. It is found in the lamellipodium. The protein resides in the cell cortex. Its subcellular location is the nucleus. The protein localises to the cell junction. It localises to the focal adhesion. The enzyme catalyses L-tyrosyl-[protein] + ATP = O-phospho-L-tyrosyl-[protein] + ADP + H(+). Activated in response to stimuli that lead to increased intracellular Ca(2+) levels; this activation is indirect and may be mediated by calcium-mediated production of reactive oxygen species (ROS). Activated by autophosphorylation at Tyr-402; this creates a binding site for SRC family kinases and leads to phosphorylation at additional tyrosine residues. Phosphorylation at Tyr-402, Tyr-579 and Tyr-580 is required for optimal kinase activity. Non-receptor protein-tyrosine kinase that regulates reorganization of the actin cytoskeleton, cell polarization, cell migration, adhesion, spreading and bone remodeling. Plays a role in the regulation of the humoral immune response, and is required for normal levels of marginal B-cells in the spleen and normal migration of splenic B-cells. Required for normal macrophage polarization and migration towards sites of inflammation. Regulates cytoskeleton rearrangement and cell spreading in T-cells, and contributes to the regulation of T-cell responses. Promotes osteoclastic bone resorption; this requires both PTK2B/PYK2 and SRC. May inhibit differentiation and activity of osteoprogenitor cells. Functions in signaling downstream of integrin and collagen receptors, immune receptors, G-protein coupled receptors (GPCR), cytokine, chemokine and growth factor receptors, and mediates responses to cellular stress. Forms multisubunit signaling complexes with SRC and SRC family members upon activation; this leads to the phosphorylation of additional tyrosine residues, creating binding sites for scaffold proteins, effectors and substrates. Regulates numerous signaling pathways. Promotes activation of phosphatidylinositol 3-kinase and of the AKT1 signaling cascade. Promotes activation of NOS3. Regulates production of the cellular messenger cGMP. Promotes activation of the MAP kinase signaling cascade, including activation of MAPK1/ERK2, MAPK3/ERK1 and MAPK8/JNK1. Promotes activation of Rho family GTPases, such as RHOA and RAC1. Recruits the ubiquitin ligase MDM2 to P53/TP53 in the nucleus, and thereby regulates P53/TP53 activity, P53/TP53 ubiquitination and proteasomal degradation. Acts as a scaffold, binding to both PDPK1 and SRC, thereby allowing SRC to phosphorylate PDPK1 at 'Tyr-9, 'Tyr-373', and 'Tyr-376'. Promotes phosphorylation of NMDA receptors by SRC family members, and thereby contributes to the regulation of NMDA receptor ion channel activity and intracellular Ca(2+) levels. May also regulate potassium ion transport by phosphorylation of potassium channel subunits. Phosphorylates SRC; this increases SRC kinase activity. Phosphorylates ASAP1, NPHP1, KCNA2 and SHC1. Promotes phosphorylation of ASAP2, RHOU and PXN; this requires both SRC and PTK2/PYK2. The protein is Protein-tyrosine kinase 2-beta (Ptk2b) of Rattus norvegicus (Rat).